The chain runs to 216 residues: Ras-related protein Rab-2B (216 aa).

GTP is bound by residues glycine 16, valine 17, glycine 18, lysine 19, serine 20, cysteine 21, and threonine 38. Position 20 (serine 20) interacts with Mg(2+). Positions leucine 37–glutamate 42 match the Switch 1 motif. Residues threonine 38 and aspartate 61 each contribute to the Mg(2+) site. Residues alanine 63–threonine 72 carry the Switch 2 motif. 6 residues coordinate GTP: glycine 64, asparagine 119, lysine 120, aspartate 122, alanine 150, and lysine 151. A compositionally biased stretch (polar residues) spans proline 189 to serine 207. Positions proline 189–cysteine 216 are disordered. 2 S-geranylgeranyl cysteine lipidation sites follow: cysteine 215 and cysteine 216.

The protein belongs to the small GTPase superfamily. Rab family. Interacts (in GTP-bound form) with GARIN4 (via N-terminus). Interacts (in GTP-bound form) with GARIN5A. Interacts (in GTP-bound form) with GARIN1B. Interacts with VPS39 and VPS41. Requires Mg(2+) as cofactor.

Its subcellular location is the cell membrane. The protein resides in the endoplasmic reticulum membrane. It localises to the golgi apparatus membrane. It is found in the cytoplasmic vesicle. The protein localises to the secretory vesicle. Its subcellular location is the acrosome. The protein resides in the autophagosome membrane. The enzyme catalyses GTP + H2O = GDP + phosphate + H(+). With respect to regulation, regulated by guanine nucleotide exchange factors (GEFs) which promote the exchange of bound GDP for free GTP, GTPase activating proteins (GAPs) which increase the GTP hydrolysis activity, and GDP dissociation inhibitors (GDIs) which inhibit the dissociation of the nucleotide from the GTPase. The small GTPases Rab are key regulators of intracellular membrane trafficking, from the formation of transport vesicles to their fusion with membranes. Rabs cycle between active GTP-bound and inactive GDP-bound states. In their active state, drive transport of vesicular carriers from donor organelles to acceptor organelles to regulate the membrane traffic that maintains organelle identity and morphology. Regulates the compacted morphology of the Golgi. Promotes cytosolic DNA-induced innate immune responses. Regulates IFN responses against DNA viruses by regulating the CGAS-STING signaling axis. Together with RAB2A redundantly required for efficient autophagic flux. The sequence is that of Ras-related protein Rab-2B (Rab2b) from Mus musculus (Mouse).